The following is a 186-amino-acid chain: Large ribosomal subunit protein eL18B (186 aa).

At Lys50 the chain carries N6,N6,N6-trimethyllysine. A Glycyl lysine isopeptide (Lys-Gly) (interchain with G-Cter in ubiquitin) cross-link involves residue Lys116.

It belongs to the eukaryotic ribosomal protein eL18 family. As to quaternary structure, component of the large ribosomal subunit (LSU). Mature yeast ribosomes consist of a small (40S) and a large (60S) subunit. The 40S small subunit contains 1 molecule of ribosomal RNA (18S rRNA) and 33 different proteins (encoded by 57 genes). The large 60S subunit contains 3 rRNA molecules (25S, 5.8S and 5S rRNA) and 46 different proteins (encoded by 81 genes). eL18 interacts with NAP1.

It localises to the cytoplasm. Its function is as follows. Component of the ribosome, a large ribonucleoprotein complex responsible for the synthesis of proteins in the cell. The small ribosomal subunit (SSU) binds messenger RNAs (mRNAs) and translates the encoded message by selecting cognate aminoacyl-transfer RNA (tRNA) molecules. The large subunit (LSU) contains the ribosomal catalytic site termed the peptidyl transferase center (PTC), which catalyzes the formation of peptide bonds, thereby polymerizing the amino acids delivered by tRNAs into a polypeptide chain. The nascent polypeptides leave the ribosome through a tunnel in the LSU and interact with protein factors that function in enzymatic processing, targeting, and the membrane insertion of nascent chains at the exit of the ribosomal tunnel. This is Large ribosomal subunit protein eL18B from Saccharomyces cerevisiae (strain ATCC 204508 / S288c) (Baker's yeast).